Consider the following 371-residue polypeptide: Alanine racemase (371 aa).

Lys40 functions as the Proton acceptor; specific for D-alanine in the catalytic mechanism. Lys40 is modified (N6-(pyridoxal phosphate)lysine). Residue Arg136 participates in substrate binding. Tyr263 (proton acceptor; specific for L-alanine) is an active-site residue. Substrate is bound at residue Met310.

This sequence belongs to the alanine racemase family. It depends on pyridoxal 5'-phosphate as a cofactor.

The catalysed reaction is L-alanine = D-alanine. It functions in the pathway amino-acid biosynthesis; D-alanine biosynthesis; D-alanine from L-alanine: step 1/1. In terms of biological role, catalyzes the interconversion of L-alanine and D-alanine. May also act on other amino acids. In Streptococcus mutans serotype c (strain ATCC 700610 / UA159), this protein is Alanine racemase (alr).